A 364-amino-acid chain; its full sequence is Aminomethyltransferase (364 aa).

This sequence belongs to the GcvT family. In terms of assembly, the glycine cleavage system is composed of four proteins: P, T, L and H.

It carries out the reaction N(6)-[(R)-S(8)-aminomethyldihydrolipoyl]-L-lysyl-[protein] + (6S)-5,6,7,8-tetrahydrofolate = N(6)-[(R)-dihydrolipoyl]-L-lysyl-[protein] + (6R)-5,10-methylene-5,6,7,8-tetrahydrofolate + NH4(+). Its function is as follows. The glycine cleavage system catalyzes the degradation of glycine. The chain is Aminomethyltransferase from Salmonella arizonae (strain ATCC BAA-731 / CDC346-86 / RSK2980).